Consider the following 137-residue polypeptide: Basic phospholipase A2 homolog 4a (137 aa).

An N-terminal signal peptide occupies residues 1–16 (MRTLWIVTVLLVGVEG). 7 cysteine pairs are disulfide-bonded: Cys42-Cys131, Cys44-Cys60, Cys59-Cys111, Cys65-Cys137, Cys66-Cys104, Cys73-Cys97, and Cys91-Cys102. The tract at residues 121–133 (KKYKIYPKFFCKK) is important for membrane-damaging activities in eukaryotes and bacteria; heparin-binding.

Belongs to the phospholipase A2 family. Group II subfamily. K49 sub-subfamily. As to quaternary structure, homodimer; non-covalently linked. Expressed by the venom gland.

Its subcellular location is the secreted. In terms of biological role, snake venom phospholipase A2 homolog that lacks enzymatic activity. Is myotoxic and displays edema-inducing activities. A model of myotoxic mechanism has been proposed: an apo Lys49-PLA2 is activated by the entrance of a hydrophobic molecule (e.g. fatty acid) at the hydrophobic channel of the protein leading to a reorientation of a monomer. This reorientation causes a transition between 'inactive' to 'active' states, causing alignment of C-terminal and membrane-docking sites (MDoS) side-by-side and putting the membrane-disruption sites (MDiS) in the same plane, exposed to solvent and in a symmetric position for both monomers. The MDoS region stabilizes the toxin on membrane by the interaction of charged residues with phospholipid head groups. Subsequently, the MDiS region destabilizes the membrane with penetration of hydrophobic residues. This insertion causes a disorganization of the membrane, allowing an uncontrolled influx of ions (i.e. calcium and sodium), and eventually triggering irreversible intracellular alterations and cell death. This Bothrops asper (Terciopelo) protein is Basic phospholipase A2 homolog 4a.